The sequence spans 443 residues: Mitochondrial enolase superfamily member 1 (443 aa).

Residues 24-26 (GSD) and Y34 each bind substrate. Position 148 is a phosphoserine (S148). Position 220 (K220) interacts with substrate. The active-site Proton donor/acceptor is K222. D250 serves as a coordination point for Mg(2+). Substrate-binding positions include N252, E276, E305, 355-357 (HAG), and E386. 2 residues coordinate Mg(2+): E276 and E305. Residue H355 is part of the active site.

This sequence belongs to the mandelate racemase/muconate lactonizing enzyme family. ENOSF1 subfamily. Requires Mg(2+) as cofactor. Post-translationally, could be sumoylated.

It localises to the mitochondrion. The catalysed reaction is L-fuconate = 2-dehydro-3-deoxy-L-fuconate + H2O. In terms of biological role, plays a role in the catabolism of L-fucose, a sugar that is part of the carbohydrates that are attached to cellular glycoproteins. Catalyzes the dehydration of L-fuconate to 2-keto-3-deoxy-L-fuconate by the abstraction of the 2-proton to generate an enediolate intermediate that is stabilized by the magnesium ion. May down-regulate thymidylate synthase activity, possibly already at the RNA level, by promoting the degradation of TYMS mRNA via an antisense RNA-based mechanism. This Pongo abelii (Sumatran orangutan) protein is Mitochondrial enolase superfamily member 1 (ENOSF1).